Here is a 123-residue protein sequence, read N- to C-terminus: Protein Wnt-3a (123 aa).

A lipid anchor (O-palmitoleoyl serine) is attached at Ser1. Residues Cys89 and Cys104 are joined by a disulfide bond. Residue Asn90 is glycosylated (N-linked (GlcNAc...) asparagine).

The protein belongs to the Wnt family. Disulfide bonds have critical and distinct roles in secretion and activity. Loss of each conserved cysteine results in high molecular weight oxidized Wnt oligomers, which are formed through inter-Wnt disulfide bonding. In terms of processing, palmitoleoylation is required for efficient binding to frizzled receptors. Depalmitoleoylation leads to Wnt signaling pathway inhibition.

It localises to the secreted. The protein resides in the extracellular space. Its subcellular location is the extracellular matrix. Its function is as follows. Ligand for members of the frizzled family of seven transmembrane receptors. Functions in the canonical Wnt signaling pathway that results in activation of transcription factors of the TCF/LEF family. Required for normal embryonic mesoderm development and formation of caudal somites. Required for normal morphogenesis of the developing neural tube. The chain is Protein Wnt-3a (WNT-3A) from Pituophis melanoleucus (Pine snake).